Here is a 124-residue protein sequence, read N- to C-terminus: Ribonuclease pancreatic (124 aa).

Positions K1–M13 are enriched in basic and acidic residues. The segment at K1–Y25 is disordered. The substrate site is built by K7 and R10. H12 acts as the Proton acceptor in catalysis. Disulfide bonds link C26/C84, C40/C95, C58/C110, and C65/C72. Residues K41–T45, K66, and R85 each bind substrate. H119 (proton donor) is an active-site residue.

It belongs to the pancreatic ribonuclease family. Monomer. Interacts with and forms tight 1:1 complexes with RNH1. Dimerization of two such complexes may occur. Interaction with RNH1 inhibits this protein. Pancreas.

The protein localises to the secreted. The catalysed reaction is an [RNA] containing cytidine + H2O = an [RNA]-3'-cytidine-3'-phosphate + a 5'-hydroxy-ribonucleotide-3'-[RNA].. It catalyses the reaction an [RNA] containing uridine + H2O = an [RNA]-3'-uridine-3'-phosphate + a 5'-hydroxy-ribonucleotide-3'-[RNA].. Endonuclease that catalyzes the cleavage of RNA on the 3' side of pyrimidine nucleotides. Acts on single-stranded and double-stranded RNA. The chain is Ribonuclease pancreatic (RNASE1) from Ondatra zibethicus (Muskrat).